Consider the following 506-residue polypeptide: Cytochrome P450 monooxygenase atr2 (506 aa).

The chain crosses the membrane as a helical span at residues 18-38 (VFAGLVLASLLTTTYCIWNIF). Cys-451 contacts heme.

The protein belongs to the cytochrome P450 family. The cofactor is heme.

The protein localises to the membrane. The catalysed reaction is 4-O-demethylbarbatate + reduced [NADPH--hemoprotein reductase] + O2 = proatranorin II + oxidized [NADPH--hemoprotein reductase] + H2O + H(+). The enzyme catalyses proatranorin II + reduced [NADPH--hemoprotein reductase] + O2 = proatranorin III + oxidized [NADPH--hemoprotein reductase] + 2 H2O + H(+). It catalyses the reaction proatranorin I + reduced [NADPH--hemoprotein reductase] + O2 = proatranorin IV + oxidized [NADPH--hemoprotein reductase] + H2O + H(+). It carries out the reaction proatranorin IV + reduced [NADPH--hemoprotein reductase] + O2 = atranorin + oxidized [NADPH--hemoprotein reductase] + 2 H2O + H(+). It functions in the pathway secondary metabolite biosynthesis; terpenoid biosynthesis. In terms of biological role, cytochrome P450 monooxygenase; part of the gene cluster that mediates the biosynthesis of atranorin, a depside of polyketide origin that accumulates in the cortical or medullary layers of lichen thalli. Atr2 performs the oxidation at the C-9 position of 4-O-demethylbarbatic acid to yield proatranorin III via proatranorin II. Atr2 is also able to oxidize the atr3 product proatranorin I to produce the final compound atranorin. The first step in the pathway is performed by the non-reducing polyketide synthase atr1 that produces 4-O-demethylbarbatic acid composed of two 3-methylorsellinic acid (3MOA) moieties. The pathway continues with the actions of the cytochrome P450 monooygenase atr2 that catalizes the oxidation of c-9 and the O-methyltransferase atr3 that performs the methylation of the carboxyl group to yield atranorin, via the proatranorin II and III intermediates if atr2 acts first, or the proatranorin I intermediate if atr3 acts first. This Stereocaulon alpinum (Alpine snow lichen) protein is Cytochrome P450 monooxygenase atr2.